The following is a 30-amino-acid chain: Sperm protamine P5 (30 aa).

The tract at residues 1 to 30 (YRRRRRRGRRGRRRRGRRRRSRGRRRAHGG) is disordered.

Testis.

It localises to the nucleus. It is found in the chromosome. Protamines substitute for histones in the chromatin of sperm during the haploid phase of spermatogenesis. They compact sperm DNA into a highly condensed, stable and inactive complex. In Octopus vulgaris (Common octopus), this protein is Sperm protamine P5.